We begin with the raw amino-acid sequence, 63 residues long: Large ribosomal subunit protein bL28 (63 aa).

This sequence belongs to the bacterial ribosomal protein bL28 family.

The sequence is that of Large ribosomal subunit protein bL28 from Alkaliphilus oremlandii (strain OhILAs) (Clostridium oremlandii (strain OhILAs)).